The chain runs to 206 residues: Large ribosomal subunit protein uL4 (206 aa).

The tract at residues 60–84 (TAKPFKQKGTGHARQGSKRSPQFRG) is disordered. A compositionally biased stretch (basic residues) spans 64–76 (FKQKGTGHARQGS).

This sequence belongs to the universal ribosomal protein uL4 family. As to quaternary structure, part of the 50S ribosomal subunit.

Its function is as follows. One of the primary rRNA binding proteins, this protein initially binds near the 5'-end of the 23S rRNA. It is important during the early stages of 50S assembly. It makes multiple contacts with different domains of the 23S rRNA in the assembled 50S subunit and ribosome. Functionally, forms part of the polypeptide exit tunnel. The polypeptide is Large ribosomal subunit protein uL4 (Rhodospirillum rubrum (strain ATCC 11170 / ATH 1.1.1 / DSM 467 / LMG 4362 / NCIMB 8255 / S1)).